Reading from the N-terminus, the 825-residue chain is Probable inorganic carbon transporter subunit DabA (825 aa).

Zn(2+) is bound by residues Cys-334, Asp-336, His-521, and Cys-536.

This sequence belongs to the inorganic carbon transporter (TC 9.A.2) DabA family. In terms of assembly, forms a complex with DabB. The cofactor is Zn(2+).

It is found in the cell inner membrane. Part of an energy-coupled inorganic carbon pump. This chain is Probable inorganic carbon transporter subunit DabA, found in Acidithiobacillus ferrooxidans (strain ATCC 53993 / BNL-5-31) (Leptospirillum ferrooxidans (ATCC 53993)).